Reading from the N-terminus, the 550-residue chain is Hydroxylamine reductase (550 aa).

Residues C3, C6, C18, and C25 each contribute to the [2Fe-2S] cluster site. Residues H249, E273, C317, C405, C433, C458, E492, and K494 each contribute to the hybrid [4Fe-2O-2S] cluster site. Residue C405 is modified to Cysteine persulfide.

Belongs to the HCP family. [2Fe-2S] cluster is required as a cofactor. Requires hybrid [4Fe-2O-2S] cluster as cofactor.

Its subcellular location is the cytoplasm. The catalysed reaction is A + NH4(+) + H2O = hydroxylamine + AH2 + H(+). Its function is as follows. Catalyzes the reduction of hydroxylamine to form NH(3) and H(2)O. The polypeptide is Hydroxylamine reductase (Salmonella typhi).